The chain runs to 283 residues: Pantothenate synthetase (283 aa).

30-37 (MGYLHEGH) serves as a coordination point for ATP. His-37 acts as the Proton donor in catalysis. Gln-61 contributes to the (R)-pantoate binding site. Gln-61 contacts beta-alanine. An ATP-binding site is contributed by 147–150 (GLKD). Gln-153 is a binding site for (R)-pantoate. Residues Val-176 and 184–187 (KSSR) contribute to the ATP site.

This sequence belongs to the pantothenate synthetase family. In terms of assembly, homodimer.

It localises to the cytoplasm. The enzyme catalyses (R)-pantoate + beta-alanine + ATP = (R)-pantothenate + AMP + diphosphate + H(+). Its pathway is cofactor biosynthesis; (R)-pantothenate biosynthesis; (R)-pantothenate from (R)-pantoate and beta-alanine: step 1/1. In terms of biological role, catalyzes the condensation of pantoate with beta-alanine in an ATP-dependent reaction via a pantoyl-adenylate intermediate. In Halalkalibacterium halodurans (strain ATCC BAA-125 / DSM 18197 / FERM 7344 / JCM 9153 / C-125) (Bacillus halodurans), this protein is Pantothenate synthetase.